The chain runs to 374 residues: Queuine tRNA-ribosyltransferase (374 aa).

Aspartate 89 acts as the Proton acceptor in catalysis. Residues 89-93, aspartate 143, glutamine 187, and glycine 214 contribute to the substrate site; that span reads DSGGF. Residues 245-251 form an RNA binding region; the sequence is GVGKPED. Catalysis depends on aspartate 264, which acts as the Nucleophile. Positions 269–273 are RNA binding; important for wobble base 34 recognition; the sequence is TRNAR. 4 residues coordinate Zn(2+): cysteine 302, cysteine 304, cysteine 307, and histidine 333.

Belongs to the queuine tRNA-ribosyltransferase family. Homodimer. Within each dimer, one monomer is responsible for RNA recognition and catalysis, while the other monomer binds to the replacement base PreQ1. Zn(2+) serves as cofactor.

It carries out the reaction 7-aminomethyl-7-carbaguanine + guanosine(34) in tRNA = 7-aminomethyl-7-carbaguanosine(34) in tRNA + guanine. Its pathway is tRNA modification; tRNA-queuosine biosynthesis. Its function is as follows. Catalyzes the base-exchange of a guanine (G) residue with the queuine precursor 7-aminomethyl-7-deazaguanine (PreQ1) at position 34 (anticodon wobble position) in tRNAs with GU(N) anticodons (tRNA-Asp, -Asn, -His and -Tyr). Catalysis occurs through a double-displacement mechanism. The nucleophile active site attacks the C1' of nucleotide 34 to detach the guanine base from the RNA, forming a covalent enzyme-RNA intermediate. The proton acceptor active site deprotonates the incoming PreQ1, allowing a nucleophilic attack on the C1' of the ribose to form the product. After dissociation, two additional enzymatic reactions on the tRNA convert PreQ1 to queuine (Q), resulting in the hypermodified nucleoside queuosine (7-(((4,5-cis-dihydroxy-2-cyclopenten-1-yl)amino)methyl)-7-deazaguanosine). The protein is Queuine tRNA-ribosyltransferase of Shewanella baltica (strain OS223).